Here is a 1019-residue protein sequence, read N- to C-terminus: Limulus clotting factor C (1019 aa).

The N-terminal stretch at 1–25 is a signal peptide; the sequence is MVLASFLVSGLVLGLLAQKMRPVQS. One can recognise an EGF-like domain in the interval 102-137; sequence YGTWCSGECQCKNGGICDQRTGACACRDRYEGVHCE. 17 disulfide bridges follow: Cys-106–Cys-118, Cys-112–Cys-125, Cys-127–Cys-136, Cys-142–Cys-182, Cys-168–Cys-195, Cys-199–Cys-241, Cys-227–Cys-254, Cys-260–Cys-308, Cys-294–Cys-321, Cys-331–Cys-350, Cys-354–Cys-374, Cys-436–Cys-447, Cys-464–Cys-564, Cys-538–Cys-556, Cys-576–Cys-621, Cys-607–Cys-634, and Cys-720–Cys-748. 3 Sushi domains span residues 140 to 197, 198 to 256, and 258 to 323; these read KGCP…KCIR, ECAM…QCKN, and VFCP…SCVK. Positions 325-421 constitute an LCCL domain; the sequence is ADREVDCDSK…EELKSLARSF (97 aa). The C-type lectin domain occupies 436–568; sequence CPDGWFEVDE…PSSFACMMDL (133 aa). Asn-523 and Asn-534 each carry an N-linked (GlcNAc...) asparagine glycan. 2 Sushi domains span residues 574-636 and 689-750; these read AKCD…RCIK and PRSS…SCIP. N-linked (GlcNAc...) asparagine glycans are attached at residues Asn-624, Asn-740, and Asn-767. Positions 763–1019 constitute a Peptidase S1 domain; it reads IWNGNSTEIG…VFLSWIRQFI (257 aa). Cys-794 and Cys-810 are joined by a disulfide. Residues His-809 and Asp-865 each act as charge relay system in the active site. A glycan (N-linked (GlcNAc...) asparagine) is linked at Asn-912. Cysteines 932 and 951 form a disulfide. Asp-960 contacts substrate. Cys-962 and Cys-996 are disulfide-bonded. Residue Ser-966 is the Charge relay system of the active site.

Belongs to the peptidase S1 family. In terms of assembly, heterodimer of a light chain and a heavy chain linked by a disulfide bond.

It localises to the secreted. The catalysed reaction is Selective cleavage of 103-Arg-|-Ser-104 and 124-Ile-|-Ile-125 bonds in Limulus clotting factor B to form activated factor B. Cleavage of -Pro-Arg-|-Xaa- bonds in synthetic substrates.. Activated by Gram-negative bacterial lipopolysaccharides and chymotrypsin. Its function is as follows. This enzyme is closely associated with an endotoxin-sensitive hemolymph coagulation system which may play important roles in both hemostasis and host defense mechanisms. Its active form catalyzes the activation of factor B. The chain is Limulus clotting factor C from Carcinoscorpius rotundicauda (Mangrove horseshoe crab).